The primary structure comprises 337 residues: WAT1-related protein At1g11460 (337 aa).

The next 10 helical transmembrane spans lie at 14 to 34 (WPPI…NALV), 46 to 66 (IIGA…AYIL), 83 to 103 (FISG…GLSY), 107 to 127 (TVAC…ALIL), 139 to 159 (AGMI…FLTF), 188 to 208 (WLLG…WILF), 220 to 240 (FSST…LSLY), 254 to 274 (FVIG…TVSV), 284 to 304 (VFVS…DFII), and 309 to 329 (LYLG…VFLW). In terms of domain architecture, EamA 1 spans 27-157 (MGSVNALVKK…IICISGALFL (131 aa)). The region spanning 220-328 (FSSTCLMSIF…GTITGLYVFL (109 aa)) is the EamA 2 domain.

The protein belongs to the drug/metabolite transporter (DMT) superfamily. Plant drug/metabolite exporter (P-DME) (TC 2.A.7.4) family.

The protein localises to the membrane. This Arabidopsis thaliana (Mouse-ear cress) protein is WAT1-related protein At1g11460.